The sequence spans 481 residues: ATP synthase subunit beta (481 aa).

Residue 160-167 (GGAGVGKT) coordinates ATP.

This sequence belongs to the ATPase alpha/beta chains family. In terms of assembly, F-type ATPases have 2 components, CF(1) - the catalytic core - and CF(0) - the membrane proton channel. CF(1) has five subunits: alpha(3), beta(3), gamma(1), delta(1), epsilon(1). CF(0) has three main subunits: a(1), b(2) and c(9-12). The alpha and beta chains form an alternating ring which encloses part of the gamma chain. CF(1) is attached to CF(0) by a central stalk formed by the gamma and epsilon chains, while a peripheral stalk is formed by the delta and b chains.

It localises to the cell inner membrane. It catalyses the reaction ATP + H2O + 4 H(+)(in) = ADP + phosphate + 5 H(+)(out). Produces ATP from ADP in the presence of a proton gradient across the membrane. The catalytic sites are hosted primarily by the beta subunits. This Myxococcus xanthus (strain DK1622) protein is ATP synthase subunit beta.